The following is a 619-amino-acid chain: Dynein axonemal intermediate chain 2 (619 aa).

WD repeat units lie at residues 214–254 (KPSS…LVAE), 261–302 (SHRD…EPTE), 362–401 (GHHG…SSIM), 405–445 (YHMA…CDPA), and 450–489 (VCDD…STLQ). A disordered region spans residues 566–619 (EALKKKPKPKKASIEVEGEDELEDIAGEEEESGIIMGEDTGEDDMDEKNEGGAP). Residues 581–597 (VEGEDELEDIAGEEEES) are compositionally biased toward acidic residues.

The protein belongs to the dynein intermediate chain family. Consists of at least two heavy chains and a number of intermediate and light chains. Interacts with DNAAF2. Interacts with DNAAF6/PIH1D3. Interacts with HEATR2; probably involved in outer arm dynein assembly. Interacts with CFAP53.

The protein resides in the cytoplasm. Its subcellular location is the cytoskeleton. It localises to the cilium axoneme. It is found in the dynein axonemal particle. In terms of biological role, part of the dynein complex of respiratory cilia. This Rattus norvegicus (Rat) protein is Dynein axonemal intermediate chain 2 (Dnai2).